A 68-amino-acid chain; its full sequence is Large ribosomal subunit protein uL29 (68 aa).

The protein belongs to the universal ribosomal protein uL29 family.

The protein is Large ribosomal subunit protein uL29 of Rhodopseudomonas palustris (strain BisA53).